The following is a 122-amino-acid chain: Ribosomal protein eL22-like (122 aa).

3 positions are modified to phosphoserine: Ser-112, Ser-118, and Ser-120.

It belongs to the eukaryotic ribosomal protein eL22 family.

This Bos taurus (Bovine) protein is Ribosomal protein eL22-like (RPL22L1).